Consider the following 420-residue polypeptide: Probable glycosyltransferase YdaM (420 aa).

4 helical membrane passes run 4–24, 299–319, 332–352, and 371–391; these read TLFFISLSLIWVMLLYHMFLM, IIFDLFYFFFTYFLFFFGVIM, LHLSVGFLAMILWILAFFLFM, and FFIVFLMYFTYSQAWIVLVIY.

Belongs to the glycosyltransferase 2 family.

Its subcellular location is the cell membrane. This chain is Probable glycosyltransferase YdaM (ydaM), found in Bacillus subtilis (strain 168).